Consider the following 252-residue polypeptide: Phosphate import ATP-binding protein PstB 1 (252 aa).

The ABC transporter domain occupies 6–247; it reads LQIRDLSVYY…PKRKETEDYI (242 aa). Residue 38-45 coordinates ATP; sequence GPSGSGKS.

The protein belongs to the ABC transporter superfamily. Phosphate importer (TC 3.A.1.7) family. The complex is composed of two ATP-binding proteins (PstB), two transmembrane proteins (PstC and PstA) and a solute-binding protein (PstS).

It localises to the cell membrane. The enzyme catalyses phosphate(out) + ATP + H2O = ADP + 2 phosphate(in) + H(+). Part of the ABC transporter complex PstSACB involved in phosphate import. Responsible for energy coupling to the transport system. This is Phosphate import ATP-binding protein PstB 1 from Streptococcus pyogenes serotype M1.